Here is a 258-residue protein sequence, read N- to C-terminus: Transmembrane O-methyltransferase homolog (258 aa).

S-adenosyl-L-methionine contacts are provided by residues glutamate 104, 106–107, serine 112, glutamate 130, and serine 160; that span reads GT.

It belongs to the class I-like SAM-binding methyltransferase superfamily. Cation-dependent O-methyltransferase family. In terms of assembly, interacts with LHFPL5, PCDH15, TMC1, TMC2 and TMIE. Interacts directly with TMC1. The interaction of TOMT with TMC1 and TMC2 is required for the transportation of TMC1/2 into the stereocilia of hair cells.

The protein localises to the cytoplasm. Its subcellular location is the endoplasmic reticulum. The catalysed reaction is a catechol + S-adenosyl-L-methionine = a guaiacol + S-adenosyl-L-homocysteine + H(+). Its function is as follows. Catalyzes the O-methylation, and thereby the inactivation, of catecholamine neurotransmitters and catechol hormones. Required for auditory function. Component of the cochlear hair cell's mechanotransduction (MET) machinery. Involved in the assembly of the asymmetric tip-link MET complex. Required for transportation of TMC1 and TMC2 proteins into the mechanically sensitive stereocilia of the hair cells. The function in MET is independent of the enzymatic activity. This Rattus norvegicus (Rat) protein is Transmembrane O-methyltransferase homolog.